A 122-amino-acid chain; its full sequence is Large ribosomal subunit protein uL14 (122 aa).

The protein belongs to the universal ribosomal protein uL14 family. As to quaternary structure, part of the 50S ribosomal subunit. Forms a cluster with proteins L3 and L19. In the 70S ribosome, L14 and L19 interact and together make contacts with the 16S rRNA in bridges B5 and B8.

In terms of biological role, binds to 23S rRNA. Forms part of two intersubunit bridges in the 70S ribosome. This Sphingopyxis alaskensis (strain DSM 13593 / LMG 18877 / RB2256) (Sphingomonas alaskensis) protein is Large ribosomal subunit protein uL14.